A 395-amino-acid polypeptide reads, in one-letter code: S-adenosylmethionine synthase (395 aa).

Residue His16 participates in ATP binding. Mg(2+) is bound at residue Asp18. Glu44 provides a ligand contact to K(+). 2 residues coordinate L-methionine: Glu57 and Gln100. Positions 100-110 are flexible loop; that stretch reads QSPDIAQGVDD. ATP contacts are provided by residues 174 to 176, 241 to 242, Asp250, 256 to 257, Ala273, and Lys277; these read DAK, RF, and RK. Asp250 lines the L-methionine pocket. Lys281 is an L-methionine binding site.

It belongs to the AdoMet synthase family. Homotetramer; dimer of dimers. Mg(2+) is required as a cofactor. Requires K(+) as cofactor.

The protein resides in the cytoplasm. The catalysed reaction is L-methionine + ATP + H2O = S-adenosyl-L-methionine + phosphate + diphosphate. The protein operates within amino-acid biosynthesis; S-adenosyl-L-methionine biosynthesis; S-adenosyl-L-methionine from L-methionine: step 1/1. Its function is as follows. Catalyzes the formation of S-adenosylmethionine (AdoMet) from methionine and ATP. The overall synthetic reaction is composed of two sequential steps, AdoMet formation and the subsequent tripolyphosphate hydrolysis which occurs prior to release of AdoMet from the enzyme. This is S-adenosylmethionine synthase from Levilactobacillus brevis (strain ATCC 367 / BCRC 12310 / CIP 105137 / JCM 1170 / LMG 11437 / NCIMB 947 / NCTC 947) (Lactobacillus brevis).